Consider the following 458-residue polypeptide: MVSPSIEVLNSIADGKKYITSKELKKHNNPNDLWISILGKVYNVTEWAKEHPGGDAPLINLAGQDVTDAFIAFHPGTAWKHLDKLFTGYHLKDYQVSDISRDYRKLASEFAKAGMFEKKGHGVIYSLCFVSLLLSACVYGVLYSGSFWIHMLSGAILGLAWMQIAYLGHDAGHYQMMATRGWNKFAGIFIGNCITGISIAWWKWTHNAHHIACNSLDYDPDLQHLPMLAVSSKLFNSITSVFYGRQLTFDPLARFFVSYQHYLYYPIMCVARVNLYLQTILLLISKRKIPDRGLNILGTLIFWTWFPLLVSRLPNWPERVAFVLVSFCVTGIQHIQFTLNHFSGDVYVGPPKGDNWFEKQTRGTIDIACSSWMDWFFGGLQFQLEHHLFPRLPRCHLRSISPICRELCKKYNLPYVSLSFYDANVTTLKTLRTAALQARDLTNPAPQNLAWEAFNTHG.

The region spanning 16–100 is the Cytochrome b5 heme-binding domain; the sequence is KKYITSKELK…LKDYQVSDIS (85 aa). Positions 51 and 74 each coordinate heme. 2 consecutive transmembrane segments (helical) span residues 122 to 142 and 147 to 167; these read GVIYSLCFVSLLLSACVYGVL and FWIHMLSGAILGLAWMQIAYL. Positions 169–173 match the Histidine box-1 motif; the sequence is HDAGH. Residues 185 to 205 form a helical membrane-spanning segment; sequence FAGIFIGNCITGISIAWWKWT. Residues 206 to 210 carry the Histidine box-2 motif; the sequence is HNAHH. The next 3 helical transmembrane spans lie at 264–284, 293–313, and 320–340; these read YYPIMCVARVNLYLQTILLLI, GLNILGTLIFWTWFPLLVSRL, and VAFVLVSFCVTGIQHIQFTLN. The Histidine box-3 signature appears at 383–387; that stretch reads QLEHH.

This sequence belongs to the fatty acid desaturase type 1 family. It depends on Fe cation as a cofactor.

It is found in the membrane. The catalysed reaction is an N-acyl-(4R)-4-hydroxysphinganine + 2 Fe(II)-[cytochrome b5] + O2 + 2 H(+) = a (4R,8E)-4-hydroxysphingenine ceramide + 2 Fe(III)-[cytochrome b5] + 2 H2O. It carries out the reaction an N-acyl-(4R)-4-hydroxysphinganine + 2 Fe(II)-[cytochrome b5] + O2 + 2 H(+) = a (4R,8Z)-4-hydroxysphing-8-enine ceramide + 2 Fe(III)-[cytochrome b5] + 2 H2O. In terms of biological role, plays a major role as delta(8)-fatty-acid desaturase which introduces a double bond at the 8-position in the long-chain base (LCB) of ceramides with or without a hydroxy group at the 4-position. The enzyme produces both the 8E and 8Z isomers. This structural modification contributes to the quantitative partitioning of ceramides between the two major sphingolipid classes, glucosylceramides and glycosylinositolphosphoryl ceramides. Sphingolipids are important membrane components involved in environmental stress responses, such as resistance to chilling, and act as cell signaling molecules. This is Delta(8)-fatty-acid desaturase (sld1) from Helianthus annuus (Common sunflower).